Reading from the N-terminus, the 396-residue chain is 1-deoxy-D-xylulose 5-phosphate reductoisomerase (396 aa).

Residues Thr15, Gly16, Ser17, Ile18, Gly41, and Asn129 each contribute to the NADPH site. Residue Lys130 coordinates 1-deoxy-D-xylulose 5-phosphate. An NADPH-binding site is contributed by Glu131. Residue Asp155 participates in Mn(2+) binding. 4 residues coordinate 1-deoxy-D-xylulose 5-phosphate: Ser156, Glu157, Ser182, and His205. Position 157 (Glu157) interacts with Mn(2+). Residue Gly211 coordinates NADPH. Ser218, Asn223, Lys224, and Glu227 together coordinate 1-deoxy-D-xylulose 5-phosphate. Glu227 serves as a coordination point for Mn(2+).

It belongs to the DXR family. Requires Mg(2+) as cofactor. Mn(2+) serves as cofactor.

The catalysed reaction is 2-C-methyl-D-erythritol 4-phosphate + NADP(+) = 1-deoxy-D-xylulose 5-phosphate + NADPH + H(+). Its pathway is isoprenoid biosynthesis; isopentenyl diphosphate biosynthesis via DXP pathway; isopentenyl diphosphate from 1-deoxy-D-xylulose 5-phosphate: step 1/6. Catalyzes the NADPH-dependent rearrangement and reduction of 1-deoxy-D-xylulose-5-phosphate (DXP) to 2-C-methyl-D-erythritol 4-phosphate (MEP). This chain is 1-deoxy-D-xylulose 5-phosphate reductoisomerase, found in Xanthomonas axonopodis pv. citri (strain 306).